Here is a 142-residue protein sequence, read N- to C-terminus: uncharacterized protein (142 aa).

The tract at residues 1–31 (MSLPKKKKPEVEEEEKPEEEEEKEEEQEIDI) is disordered. The span at 11 to 29 (VEEEEKPEEEEEKEEEQEI) shows a compositional bias: acidic residues.

This is an uncharacterized protein from Acidianus sp. F28 (AFV-2).